The sequence spans 431 residues: Enolase (431 aa).

Positions 157 and 166 each coordinate substrate. The active-site Proton donor is the Glu-209. Mg(2+) contacts are provided by Asp-244, Glu-293, and Asp-318. Substrate is bound by residues Glu-293 and Asp-318. The active-site Proton acceptor is Lys-343. Residues 370-373 (SHRS) and Lys-394 contribute to the substrate site.

It belongs to the enolase family. Homodimer. The cofactor is Mg(2+).

It localises to the cytoplasm. The catalysed reaction is (2R)-2-phosphoglycerate = phosphoenolpyruvate + H2O. It functions in the pathway carbohydrate degradation; glycolysis; pyruvate from D-glyceraldehyde 3-phosphate: step 4/5. The chain is Enolase (ENO) from Fasciola hepatica (Liver fluke).